The chain runs to 439 residues: ATP-dependent RNA helicase RhlB (439 aa).

The Q motif signature appears at 9–37; the sequence is QKFADLPLHPEVKQALAENGFEFCTPIQA. Residues 40–219 enclose the Helicase ATP-binding domain; sequence LPVLLQSKDI…YDHMNDPVKV (180 aa). Residue 53-60 participates in ATP binding; it reads AQTGTGKT. The DEAD box motif lies at 165–168; that stretch reads DEAD. Residues 243 to 390 enclose the Helicase C-terminal domain; sequence KMRLLLTLIE…VSNYDRDALL (148 aa). The disordered stretch occupies residues 395 to 439; the sequence is SPVKIHRKHPAGARNLRERSGAGRTPGAHRSGGRPPRHDRTRRQP. The span at 425-439 shows a compositional bias: basic residues; sequence SGGRPPRHDRTRRQP.

It belongs to the DEAD box helicase family. RhlB subfamily. Component of the RNA degradosome, which is a multiprotein complex involved in RNA processing and mRNA degradation.

The protein localises to the cytoplasm. The catalysed reaction is ATP + H2O = ADP + phosphate + H(+). DEAD-box RNA helicase involved in RNA degradation. Has RNA-dependent ATPase activity and unwinds double-stranded RNA. The chain is ATP-dependent RNA helicase RhlB from Shewanella oneidensis (strain ATCC 700550 / JCM 31522 / CIP 106686 / LMG 19005 / NCIMB 14063 / MR-1).